Here is a 668-residue protein sequence, read N- to C-terminus: MYDPARDSWEERDGDEARSCRGRLASDQPHAVFSPPEQIHGASGENNNTTDLQQHPDPSSKTTASAEVLYAESQPAQPTTQTPPSVSTRIQSPVDPAAQKASNPQSLTSTAQNQLNKSNTTMENTSGSATPKPRADPSDKPNRPVQVASPTDQNGSQGDKKRKLPAEENASEKSQPAPDRPVSKRKRMEERHQKLRKRGRTPPSAYSRRDAEETSSAADRNGPTYRSTSPLPPPRSPTPEDQPRQRKRPGGGARMGLVDRETLRRRQEERERAQVEEAMRASQSRGVADVVRQHYNAVPQRGREWRKTESKIKGLRSFNNWVKSTLIQKFSPDEEFLARFNGTKEWAEDGGVPPVEEKRLLVVDLGCGKGGDLGKWQLAPQPVDLYVGLDPAEVSIVQARERYNGMKSGRGNRGRRNPIFHAEFRPKDCFGEWLGDVDIVQQVGIDPNVGPGGSVMSSRWGGGGFDVVASMFTIHYAFESEEKARQMLRNVAGCLKKGGRFLGVCPNSDVISARVSEINAKKKARQAQAKKEKSDEAPEDGEVEEDDGKVEWGNQIYRVRFPITPPEDGVFRPPFGWKYSYFMEEAVEEVPEYVVPWEAFRALTEDYNLELQYRKPFLDIWRDEKDDPELGPLSERMGVRDRVTGKLLMTEEEKEAASFYHAFCFYKV.

Residues 1-19 are compositionally biased toward basic and acidic residues; that stretch reads MYDPARDSWEERDGDEARS. The tract at residues 1 to 281 is disordered; it reads MYDPARDSWE…RAQVEEAMRA (281 aa). The span at 44–65 shows a compositional bias: polar residues; it reads GENNNTTDLQQHPDPSSKTTAS. The span at 73–88 shows a compositional bias: low complexity; sequence SQPAQPTTQTPPSVST. The segment covering 100–129 has biased composition (polar residues); that stretch reads KASNPQSLTSTAQNQLNKSNTTMENTSGSA. Basic and acidic residues predominate over residues 133–142; it reads PRADPSDKPN. Residues 148–157 show a composition bias toward polar residues; sequence ASPTDQNGSQ. The segment covering 257-279 has biased composition (basic and acidic residues); the sequence is LVDRETLRRRQEERERAQVEEAM. Positions 310–668 constitute an mRNA cap 0 methyltransferase domain; it reads SKIKGLRSFN…FYHAFCFYKV (359 aa). 319 to 320 serves as a coordination point for mRNA; that stretch reads NN. Residues K323, G366, D390, D428, 471–473, and Y476 each bind S-adenosyl-L-methionine; that span reads MFT. The segment at 524–547 is disordered; sequence ARQAQAKKEKSDEAPEDGEVEEDD. The span at 537–547 shows a compositional bias: acidic residues; the sequence is APEDGEVEEDD.

This sequence belongs to the class I-like SAM-binding methyltransferase superfamily. mRNA cap 0 methyltransferase family.

It localises to the nucleus. It carries out the reaction a 5'-end (5'-triphosphoguanosine)-ribonucleoside in mRNA + S-adenosyl-L-methionine = a 5'-end (N(7)-methyl 5'-triphosphoguanosine)-ribonucleoside in mRNA + S-adenosyl-L-homocysteine. Its function is as follows. Responsible for methylating the 5'-cap structure of mRNAs. This Aspergillus fumigatus (strain ATCC MYA-4609 / CBS 101355 / FGSC A1100 / Af293) (Neosartorya fumigata) protein is mRNA cap guanine-N(7) methyltransferase (abd1).